The following is a 1007-amino-acid chain: uncharacterized protein (1007 aa).

The first 51 residues, Met-1 to Ala-51, serve as a signal peptide directing secretion. Over residues Met-1 to Ala-96 the composition is skewed to low complexity. Disordered stretches follow at residues Met-1 to Ile-186, Thr-200 to Pro-224, Asn-387 to Ile-533, Thr-543 to Asn-562, Glu-578 to Ile-645, Thr-655 to Asn-674, and Asp-712 to Ile-757. Polar residues predominate over residues Asp-118–Thr-163. A compositionally biased stretch (basic and acidic residues) spans His-167–Glu-176. Composition is skewed to polar residues over residues Ser-177–Ile-186 and Thr-200–Ile-210. The segment covering Val-423–Val-442 has biased composition (low complexity). Over residues Ser-443 to Gln-453 the composition is skewed to polar residues. A compositionally biased stretch (low complexity) spans Ile-469–Ser-491. A compositionally biased stretch (polar residues) spans Asp-507–Glu-523. Residues Ala-597 to Ser-618 show a composition bias toward acidic residues. Over residues Asp-619–Glu-635 the composition is skewed to low complexity. Residues Asp-712–Ser-730 are compositionally biased toward acidic residues. A compositionally biased stretch (polar residues) spans Thr-732–Asn-743.

It belongs to the chlamydial CPn_0572/CT_456/TC_0741 family.

This is an uncharacterized protein from Chlamydia muridarum (strain MoPn / Nigg).